The sequence spans 220 residues: MSSLVSNEVYDVESGLRKVIESAKANFCESVDVAINLNINSSKSDEQVRGCVVLPKGLGREVRVAVFAKGGHLEMAREAMANIVGDEELIEEVKKKQCKLDVDWCLTTPDFMASVSSIAKILGPKGLMPNPKFNTVTFELAKAIKIIKSGQIRFKSDKTGIVHAKIGNVKFSIEDLLENFNAVINAVKQCKPASIKGLYFKDVFVISTMGKSVKVENLNN.

The protein belongs to the universal ribosomal protein uL1 family. As to quaternary structure, part of the 50S ribosomal subunit.

In terms of biological role, binds directly to 23S rRNA. The L1 stalk is quite mobile in the ribosome, and is involved in E site tRNA release. Functionally, protein L1 is also a translational repressor protein, it controls the translation of the L11 operon by binding to its mRNA. This Ehrlichia canis (strain Jake) protein is Large ribosomal subunit protein uL1.